A 575-amino-acid chain; its full sequence is Arginine--tRNA ligase (575 aa).

A 'HIGH' region motif is present at residues 131–141 (ANPTGPLHVGH).

It belongs to the class-I aminoacyl-tRNA synthetase family. In terms of assembly, monomer.

It localises to the cytoplasm. The catalysed reaction is tRNA(Arg) + L-arginine + ATP = L-arginyl-tRNA(Arg) + AMP + diphosphate. The polypeptide is Arginine--tRNA ligase (Jannaschia sp. (strain CCS1)).